The following is a 451-amino-acid chain: Probable phosphoglucosamine mutase (451 aa).

The active-site Phosphoserine intermediate is S96. Mg(2+) is bound by residues S96, D233, D235, and D237. Position 96 is a phosphoserine (S96).

This sequence belongs to the phosphohexose mutase family. Mg(2+) serves as cofactor. In terms of processing, activated by phosphorylation.

The enzyme catalyses alpha-D-glucosamine 1-phosphate = D-glucosamine 6-phosphate. In terms of biological role, catalyzes the conversion of glucosamine-6-phosphate to glucosamine-1-phosphate. The protein is Probable phosphoglucosamine mutase of Pyrococcus horikoshii (strain ATCC 700860 / DSM 12428 / JCM 9974 / NBRC 100139 / OT-3).